Here is a 287-residue protein sequence, read N- to C-terminus: UPF0276 protein ACIAD0933 (287 aa).

This sequence belongs to the UPF0276 family.

This is UPF0276 protein ACIAD0933 from Acinetobacter baylyi (strain ATCC 33305 / BD413 / ADP1).